The primary structure comprises 317 residues: MCCTSGCALTIRLLGRTEIRRLAKELDFRPRKSLGQNFVHDANTVRRVVAASGVSRSDLVLEVGPGLGSLTLALLDRGATVTAVEIDPLLASRLQQTVAEHSHSEVHRLTVVNRDVLALRREDLAAAPTAVVANLPYNVAVPALLHLLVEFPSIRVVTVMVQAEVAERLAAEPGSKEYGVPSVKLRFFGRVRRCGMVSPTVFWPIPRVYSGLVRIDRYETSPWPTDDAFRRRVFELVDIAFAQRRKTSRNAFVQWAGSGSESANRLLAASIDPARRGETLSIDDFVRLLRRSGGSDEATSTGRDARAPDISGHASAS.

Asn-37, Val-39, Gly-64, Glu-85, Asp-115, and Asn-134 together coordinate S-adenosyl-L-methionine. The segment at 293-317 (GGSDEATSTGRDARAPDISGHASAS) is disordered.

This sequence belongs to the class I-like SAM-binding methyltransferase superfamily. rRNA adenine N(6)-methyltransferase family. RsmA subfamily.

It is found in the cytoplasm. The catalysed reaction is adenosine(1518)/adenosine(1519) in 16S rRNA + 4 S-adenosyl-L-methionine = N(6)-dimethyladenosine(1518)/N(6)-dimethyladenosine(1519) in 16S rRNA + 4 S-adenosyl-L-homocysteine + 4 H(+). Its function is as follows. Specifically dimethylates two adjacent adenosines (A1518 and A1519) in the loop of a conserved hairpin near the 3'-end of 16S rRNA in the 30S particle. May play a critical role in biogenesis of 30S subunits. The chain is Ribosomal RNA small subunit methyltransferase A from Mycobacterium bovis (strain BCG / Tokyo 172 / ATCC 35737 / TMC 1019).